The chain runs to 226 residues: MLTYETWEENETKGALSVLSWAYKEYKSEIVYACSFGVEGMVLLDLINQVNPSAKVVFLDTNVHFQETYELIQKVRERFPSLNIIEKQPKLTLDEQDKLHGDKLWESNPNLCCKIRKILPLEESLANEKAWISGLRREQSETRKHTKFINQDHRFQSIKVCPLIHWTWKEVWRYVYKHSLPYNSLHDIGYPSIGCEKCTLPVGEGGDSRDGRWAGKVKTECGLHYQ.

Positions 112, 113, 195, and 198 each coordinate [4Fe-4S] cluster. The active-site Nucleophile; cysteine thiosulfonate intermediate is Cys-221.

The protein belongs to the PAPS reductase family. CysH subfamily. It depends on [4Fe-4S] cluster as a cofactor.

Its subcellular location is the cytoplasm. It catalyses the reaction [thioredoxin]-disulfide + sulfite + AMP + 2 H(+) = adenosine 5'-phosphosulfate + [thioredoxin]-dithiol. It participates in sulfur metabolism; hydrogen sulfide biosynthesis; sulfite from sulfate. Catalyzes the formation of sulfite from adenosine 5'-phosphosulfate (APS) using thioredoxin as an electron donor. This is Adenosine 5'-phosphosulfate reductase from Bacillus anthracis (strain A0248).